A 185-amino-acid polypeptide reads, in one-letter code: Ribosome-recycling factor (185 aa).

This sequence belongs to the RRF family.

It is found in the cytoplasm. Responsible for the release of ribosomes from messenger RNA at the termination of protein biosynthesis. May increase the efficiency of translation by recycling ribosomes from one round of translation to another. The protein is Ribosome-recycling factor of Pseudomonas putida (strain GB-1).